Reading from the N-terminus, the 837-residue chain is Zinc fingers and homeoboxes protein 2 (837 aa).

Residues 27–77 form an interaction with EFNB1 region; sequence VDRAKEKGIGTPQPDVAKDSWAAELENSSKENEVIEVKSMGESQSKKLQGG. T37 carries the post-translational modification Phosphothreonine. Residue K64 forms a Glycyl lysine isopeptide (Lys-Gly) (interchain with G-Cter in SUMO2) linkage. 2 C2H2-type zinc fingers span residues 78–101 and 110–133; these read YECK…DMQH and YVCA…SKFH. Residues 164-180 show a composition bias toward low complexity; that stretch reads SITTSGPGTGDSDSGIS. The disordered stretch occupies residues 164–204; it reads SITTSGPGTGDSDSGISVSKTPIMKPGKPKADAKKVPKKPE. Over residues 192-204 the composition is skewed to basic and acidic residues; it reads PKADAKKVPKKPE. The required for homodimerization stretch occupies residues 195–358; sequence DAKKVPKKPE…PAQLAPTKVT (164 aa). Residue T207 is modified to Phosphothreonine. 4 DNA-binding regions (homeobox) span residues 263 to 324, 439 to 501, 530 to 591, and 628 to 690; these read NTTK…WSPE, TPAS…IVHI, PQKF…EQAV, and SPSP…TVKW. Residues 263–446 form a required for repressor activity region; the sequence is NTTKYNSALD…PLTPASDRKK (184 aa). Residues 263-497 are required for interaction with NFYA; that stretch reads NTTKYNSALD…SDHRYRCQRG (235 aa). The segment at 317–446 is required for nuclear localization; that stretch reads HGISWSPEEV…PLTPASDRKK (130 aa). The interval 404 to 445 is disordered; that stretch reads GQKRPLVTPQAAPEPKRPHIAQVPEPPPKVANPPLTPASDRK. Over residues 427–439 the composition is skewed to pro residues; it reads PEPPPKVANPPLT. K455 participates in a covalent cross-link: Glycyl lysine isopeptide (Lys-Gly) (interchain with G-Cter in SUMO2). Residues 755 to 837 are disordered; the sequence is PAKDCLPAKP…DCVPAEAGQA (83 aa). A phosphoserine mark is found at S825 and S827.

It belongs to the ZHX family. Homodimer (via homeobox domain). Heterodimer with ZHX1 (via homeobox domain 1). Heterodimer with ZHX3 (via homeobox domain 1). Heterodimerization with ZHX1 is not necessary for repressor activity. Interacts (via homeobox domain) with NFYA (via N-terminus). Interacts with EFNB1 intracellular domain peptide; the interaction enhances ZHX2 transcriptional repression activity. As to expression, ubiquitously expressed. Expressed in podocytes.

Its subcellular location is the nucleus. Its function is as follows. Acts as a transcriptional repressor. Represses the promoter activity of the CDC25C gene stimulated by NFYA. May play a role in retinal development where it regulates the composition of bipolar cell populations, by promoting differentiation of bipolar OFF-type cells. In the brain, may promote maintenance and suppress differentiation of neural progenitor cells in the developing cortex. This is Zinc fingers and homeoboxes protein 2 (ZHX2) from Homo sapiens (Human).